We begin with the raw amino-acid sequence, 408 residues long: Guanine nucleotide-binding protein alpha-14 subunit (408 aa).

Residues 39-46 (HSEELEAK), 79-86 (GGPLSGKS), 201-205 (TRIAD), 216-222 (VHSRKAT), 241-245 (DVGGQ), 285-288 (FPKF), 325-328 (NKVD), and Ala380 contribute to the GTP site. In terms of domain architecture, G-alpha spans 71 to 408 (SHIKILILGG…KANAKATGLS (338 aa)). Residues 74–87 (KILILGGPLSGKST) are G1 motif. Ser86 serves as a coordination point for Mg(2+). The G2 motif stretch occupies residues 214-222 (DIVHSRKAT). Thr222 lines the Mg(2+) pocket. A G3 motif region spans residues 237-246 (LLMIDVGGQR). A G4 motif region spans residues 321–328 (LLFFNKVD). A G5 motif region spans residues 378-383 (TTATNT).

It belongs to the G-alpha family. As to quaternary structure, g proteins are composed of 3 units; alpha, beta and gamma. The alpha chain contains the guanine nucleotide binding site. Interacts with the dopamine receptor dop-2 (via C-terminus); the interaction is direct.

In terms of biological role, guanine nucleotide-binding proteins (G proteins) are involved as modulators or transducers in various transmembrane signaling systems. In association with the G-protein coupled dopamine receptor dop-2, modulates two types of learning: touch habituation and chemosensory associative conditioning. This is Guanine nucleotide-binding protein alpha-14 subunit from Caenorhabditis elegans.